The chain runs to 572 residues: Proline--tRNA ligase (572 aa).

The protein belongs to the class-II aminoacyl-tRNA synthetase family. ProS type 1 subfamily. In terms of assembly, homodimer.

It localises to the cytoplasm. It carries out the reaction tRNA(Pro) + L-proline + ATP = L-prolyl-tRNA(Pro) + AMP + diphosphate. Its function is as follows. Catalyzes the attachment of proline to tRNA(Pro) in a two-step reaction: proline is first activated by ATP to form Pro-AMP and then transferred to the acceptor end of tRNA(Pro). As ProRS can inadvertently accommodate and process non-cognate amino acids such as alanine and cysteine, to avoid such errors it has two additional distinct editing activities against alanine. One activity is designated as 'pretransfer' editing and involves the tRNA(Pro)-independent hydrolysis of activated Ala-AMP. The other activity is designated 'posttransfer' editing and involves deacylation of mischarged Ala-tRNA(Pro). The misacylated Cys-tRNA(Pro) is not edited by ProRS. The polypeptide is Proline--tRNA ligase (Klebsiella pneumoniae (strain 342)).